The following is a 163-amino-acid chain: Nucleotide-binding protein ECA1137 (163 aa).

Belongs to the YajQ family.

Nucleotide-binding protein. This chain is Nucleotide-binding protein ECA1137, found in Pectobacterium atrosepticum (strain SCRI 1043 / ATCC BAA-672) (Erwinia carotovora subsp. atroseptica).